Consider the following 626-residue polypeptide: tRNA uridine 5-carboxymethylaminomethyl modification enzyme MnmG (626 aa).

G13–G18 serves as a coordination point for FAD. G273–F287 is an NAD(+) binding site.

The protein belongs to the MnmG family. Homodimer. Heterotetramer of two MnmE and two MnmG subunits. FAD serves as cofactor.

It is found in the cytoplasm. Functionally, NAD-binding protein involved in the addition of a carboxymethylaminomethyl (cmnm) group at the wobble position (U34) of certain tRNAs, forming tRNA-cmnm(5)s(2)U34. The protein is tRNA uridine 5-carboxymethylaminomethyl modification enzyme MnmG of Acinetobacter baumannii (strain AB307-0294).